The chain runs to 2273 residues: Retinal-specific phospholipid-transporting ATPase ABCA4 (2273 aa).

Topologically, residues 1–21 (MGFVRQIQLLLWKNWTLRKRQ) are cytoplasmic. The chain crosses the membrane as a helical span at residues 22–42 (KIRFVVELVWPLSLFLVLIWL). Residues 43-646 (RNANPLYSHH…MPYPCFVDDS (604 aa)) are Extracellular-facing. Cystine bridges form between Cys-54–Cys-81 and Cys-75–Cys-324. A glycan (N-linked (GlcNAc...) asparagine) is linked at Asn-98. Positions 336 and 338 each coordinate Mg(2+). A disulfide bond links Cys-370 and Cys-519. N-linked (GlcNAc...) asparagine glycosylation is found at Asn-415, Asn-444, and Asn-504. An N-all-trans-retinylidenephosphatidylethanolamine is bound by residues Arg-587 and Arg-653. Disulfide bonds link Cys-641–Cys-1490, Cys-1444–Cys-1455, and Cys-1488–Cys-1502. The chain crosses the membrane as a helical span at residues 647–667 (FMIILNRCFPIFMVLAWIYSV). Residues 668–699 (SMTVKSIVLEKELRLKETLKNQGVSNAVIWCT) are Cytoplasmic-facing. The chain crosses the membrane as a helical span at residues 700–720 (WFLDSFSIMSMSIFLLTIFIM). The Extracellular portion of the chain corresponds to 721-730 (HGRILHYSDP). The helical transmembrane segment at 731–751 (FILFLFLLAFSTATIMLCFLL) threads the bilayer. The Cytoplasmic portion of the chain corresponds to 752 to 759 (STFFSKAS). A helical membrane pass occupies residues 760–780 (LAAACSGVIYFTLYLPHILCF). The Extracellular portion of the chain corresponds to 781-835 (AWQDRMTAELKKAVSLLSPVAFGFGTEYLVRFEEQGLGLQWSNIGNSPTEGDEFS). A helical transmembrane segment spans residues 836–856 (FLLSMQMMLLDAAVYGLLAWY). The Cytoplasmic portion of the chain corresponds to 857-1376 (LDQVFPGDYG…IRSHKDFLAQ (520 aa)). A disordered region spans residues 891–911 (ERALEKTEPLTEETEDPEHPE). Position 901 is a phosphothreonine (Thr-901). The ABC transporter 1 domain maps to 929–1160 (VCVKNLVKIF…FGTGLYLTLV (232 aa)). Phe-938, Gly-966, and Lys-969 together coordinate ATP. Thr-970 lines the Mg(2+) pocket. ATP-binding residues include Thr-971, Gln-1010, Lys-1054, Gly-1064, Gly-1065, and His-1118. A Phosphoserine modification is found at Ser-1185. The interval 1284-1345 (PLFAGGAQQK…EPECPGPQLN (62 aa)) is disordered. Thr-1313 carries the post-translational modification Phosphothreonine. Position 1317 is a phosphoserine (Ser-1317). Positions 1331 to 1340 (GQPPPEPECP) are enriched in pro residues. Residues 1377–1397 (IVLPATFVFLALMLSIVIPPF) form a helical membrane-spanning segment. The Extracellular portion of the chain corresponds to 1398-1727 (GEYPALTLHP…VSPTTYWVTN (330 aa)). A glycan (N-linked (GlcNAc...) asparagine) is linked at Asn-1469. 3 N-linked (GlcNAc...) asparagine glycosylation sites follow: Asn-1529, Asn-1588, and Asn-1662. A helical transmembrane segment spans residues 1728–1748 (FLWDIMNYSVSAGLVVGIFIG). Residues 1749–1759 (FQKKAYTSPEN) are Cytoplasmic-facing. Residues 1760–1780 (LPALVALLLLYGWAVIPMMYP) traverse the membrane as a helical segment. The Extracellular portion of the chain corresponds to 1781–1792 (ASFLFDVPSTAY). Residues 1793–1813 (VALSCANLFIGINSSAITFIL) traverse the membrane as a helical segment. Residues 1814 to 1831 (ELFENNRTLLRFNAVLRK) lie on the Cytoplasmic side of the membrane. The chain crosses the membrane as a helical span at residues 1832–1852 (LLIVFPHFCLGRGLIDLALSQ). The Extracellular segment spans residues 1853–1873 (AVTDVYARFGEEHSANPFHWD). A helical membrane pass occupies residues 1874 to 1894 (LIGKNLFAMVVEGVVYFLLTL). Over 1895-2273 (LVQRHFFLSQ…AAGASRQAQD (379 aa)) the chain is Cytoplasmic. An ABC transporter 2 domain is found at 1938-2170 (LRLHELTKIY…FGDGYIVTMK (233 aa)). ATP is bound by residues Asn-1974, Gly-1975, Lys-1978, Thr-1979, Thr-1980, and Gly-2073. Thr-1979 is a binding site for Mg(2+). Residues 2244-2249 (VFVNFA) are essential for ATP binding and ATPase activity.

Belongs to the ABC transporter superfamily. ABCA family. Post-translationally, proteolytic cleavage by trypsin leads to a 120-kDa N-terminal fragment and a 115-kDa C-terminal fragment that are linked through disulfide bonds. In terms of processing, N-glycosylated. Phosphorylation is independent of light exposure and modulates ATPase activity. In terms of tissue distribution, retinal-specific. Seems to be exclusively found in the rims of rod photoreceptor cells.

It localises to the membrane. It is found in the endoplasmic reticulum. The protein resides in the cytoplasmic vesicle. Its subcellular location is the cell projection. The protein localises to the cilium. It localises to the photoreceptor outer segment. The catalysed reaction is an N-all-trans-retinylidenephosphatidylethanolamine(out) + ATP + H2O = an N-all-trans-retinylidenephosphatidylethanolamine(in) + ADP + phosphate + H(+). It carries out the reaction ATP + H2O + phospholipidSide 1 = ADP + phosphate + phospholipidSide 2.. It catalyses the reaction a 1,2-diacyl-sn-glycero-3-phosphoethanolamine(out) + ATP + H2O = a 1,2-diacyl-sn-glycero-3-phosphoethanolamine(in) + ADP + phosphate + H(+). The enzyme catalyses N-11-cis-retinylidenephosphatidylethanolamine(out) + ATP + H2O = N-11-cis-retinylidenephosphatidylethanolamine(in) + ADP + phosphate + H(+). The catalysed reaction is ATP + H2O = ADP + phosphate + H(+). With respect to regulation, ATPase activity is decreased by cholesterol and ceramide. Phospholipids translocase activity is highly reduced by berylium fluoride and aluminum floride. N-ethylmaleimide inhibits phospholipid translocase activity. Flippase that catalyzes in an ATP-dependent manner the transport of retinal-phosphatidylethanolamine conjugates like 11-cis and all-trans isomers of N-retinylidene-phosphatidylethanolamine (N-Ret-PE) from the lumen to the cytoplasmic leaflet of photoreceptor outer segment disk membranes, where 11-cis-retinylidene-phosphatidylethanolamine is then isomerized to its all-trans isomer and reduced by RDH8 to produce all-trans-retinol. This transport activity ensures that all-trans-retinal generated from photoexcitation and 11-cis-retinal not needed for the regeneration of rhodopsin and cone opsins are effectively cleared from the photoreceptors, therefore preventing their accumulation and the formation of toxic bisretinoid. Displays ATPase activity in vitro in absence of retinal substrate. May display GTPase activity that is strongly influenced by the lipid environment and the presence of retinoid compounds. Binds the unprotonated form of N-retinylidene-phosphatidylethanolamine with high affinity in the absence of ATP, and ATP binding and hydrolysis induce a protein conformational change that causes N-retinylidene-phosphatidylethanolamine release. This is Retinal-specific phospholipid-transporting ATPase ABCA4 from Homo sapiens (Human).